The chain runs to 155 residues: Transcriptional repressor NrdR (155 aa).

A zinc finger lies at 3–34 (CPFCGNVDTQVKDSRPAEDHVAIRRRRFCPAC). Residues 49-139 (LVVIKSSGKR…VYKNFQAADD (91 aa)) enclose the ATP-cone domain.

It belongs to the NrdR family. Requires Zn(2+) as cofactor.

In terms of biological role, negatively regulates transcription of bacterial ribonucleotide reductase nrd genes and operons by binding to NrdR-boxes. This chain is Transcriptional repressor NrdR, found in Dinoroseobacter shibae (strain DSM 16493 / NCIMB 14021 / DFL 12).